The chain runs to 457 residues: Phosphoglucosamine mutase (457 aa).

The active-site Phosphoserine intermediate is the Ser109. Positions 109, 251, 253, and 255 each coordinate Mg(2+). At Ser109 the chain carries Phosphoserine.

This sequence belongs to the phosphohexose mutase family. The cofactor is Mg(2+). Post-translationally, activated by phosphorylation.

The catalysed reaction is alpha-D-glucosamine 1-phosphate = D-glucosamine 6-phosphate. Functionally, catalyzes the conversion of glucosamine-6-phosphate to glucosamine-1-phosphate. This is Phosphoglucosamine mutase from Bdellovibrio bacteriovorus (strain ATCC 15356 / DSM 50701 / NCIMB 9529 / HD100).